Reading from the N-terminus, the 870-residue chain is Dynamin-2 (870 aa).

The region spanning 28–294 is the Dynamin-type G domain; that stretch reads HLDLPQIAVV…LTNHIRESLP (267 aa). Positions 38 to 45 are G1 motif; sequence GGQSAGKS. GDP is bound by residues serine 41, glycine 43, lysine 44, serine 45, serine 46, arginine 59, and glycine 60. Positions 64–66 are G2 motif; sequence VTR. The tract at residues 136–139 is G3 motif; that stretch reads DLPG. A G4 motif region spans residues 205-208; sequence TKLD. Positions 206, 208, and 211 each coordinate GDP. Residue tyrosine 231 is modified to Phosphotyrosine; by SRC. A G5 motif region spans residues 235–238; it reads VNRS. GDP contacts are provided by asparagine 236, arginine 237, and glutamine 239. Lysine 299 is modified (N6-acetyllysine). Residues 519–625 form the PH domain; sequence LVIRRGWLTI…WKASFLRAGV (107 aa). The residue at position 597 (tyrosine 597) is a Phosphotyrosine; by SRC. Lysine 598 carries the N6-acetyllysine modification. Residues 653-744 form the GED domain; the sequence is VETIRNLVDS…IIGDISTSTV (92 aa). A disordered region spans residues 741-870; the sequence is TSTVSTPVPP…IRPAEPSLLD (130 aa). At threonine 755 the chain carries Phosphothreonine. The segment covering 756 to 767 has biased composition (polar residues); that stretch reads WLQSASSHSPTP. The residue at position 764 (serine 764) is a Phosphoserine; by CDK1. The span at 796–806 shows a compositional bias: low complexity; sequence VPVGAAASFSA. Pro residues predominate over residues 826–855; the sequence is PAPPQIPSRPVRIPPGIPPGVPSRRPPAAP. Serine 848 is modified (phosphoserine; by GSK3-alpha).

The protein belongs to the TRAFAC class dynamin-like GTPase superfamily. Dynamin/Fzo/YdjA family. In terms of assembly, oligomerizes into a helical polymer that self-assembles around the vesicle membrane, when associated to the menbrane through lipid binding. Interacts with SHANK1 and SHANK2. Interacts with SNX9. Interacts (via C-terminal proline-rich domain (PRD)) with SNX18 (via SH3 domain); this interaction regulates ATG9A and ATG16L1 trafficking from recycling endosomes to sites of autophagosome formation. Interacts with SNX33 (via SH3 domain). Interacts with MYO1E (via SH3 domain). Interacts with PSTPIP1 (via SH3 domain). Interacts with CTNND2. Interacts (via C-terminal proline-rich domain (PRD)) with BIN1 (via SH3 domain); this interaction allows the recruitment of DNM2 to the membrane tubules and inhibits self-assembly-stimulated GTPase activity on the membrane. Interacts with GABARAP, GABARAPL1 and GABARAPL2. Interacts with MAP1LC3B (the lipidate and non-lipidated LC3 form); this interaction mediates recycling endosome scission leading to autophagosome release. Interacts with ITSN1. Interacts (via C-terminal proline-rich domain (PRD)) with SH3BP4 (via SH3 domain); this interaction controls the GTPase activity and is prevented by EGFR-induced tyrosine phosphorylation of either DNM2 or SH3BP4. May interact with PIK3C3. May be a component of a complex composed of RAB5A (in GDP-bound form), DYN2 and PIK3C3. Interacts with SDC4; this interaction is markedly enhanced at focal ahesion site upon induction of focal adhesions and stress-fiber formation. Interacts with ACTN1. Interacts with CTTN; this interaction stimulates the intrinsic GTPase activity of DNM2 and stabilizes the association of DNM2 and actin filaments; in addition this interaction is stimulated by ligand binding to the receptor, leading to the recruitment of the DNM2-CTTN complex to the sequestered receptor-ligand complex to its internalization. Interacts with NOSTRIN (via SH3 domain); this interaction allows the recruitment of NOS3 to dynamin-positive structures. Interacts with TUBG1; this interaction may participate in centrosome cohesion. Post-translationally, phosphorylation at Ser-848 by GSK3-alpha relieves the inhibition of BIN1 and promotes endocytosis. Phosphorylation at Ser-764 by CDK1 is greatly increased upon mitotic entry. It regulates cytokinesis downstream of calcineurin, and does not affect clathrin-mediated endocytosis. Dephosphorylated by calcineurin/PP2 during cytokinesis in a Ca(2+)- and calmodulin-dependent manner. Phosphorylated on tyrosine residues by EGFR and after activation of SRC. As to expression, widely expressed. Expressed in skeletal muscle and the peripheral nerve.

Its subcellular location is the cytoplasm. It localises to the cytoskeleton. It is found in the cytoplasmic vesicle. The protein localises to the clathrin-coated vesicle. The protein resides in the cell projection. Its subcellular location is the uropodium. It localises to the endosome. It is found in the microtubule organizing center. The protein localises to the centrosome. The protein resides in the centriole. Its subcellular location is the recycling endosome. It localises to the phagocytic cup. It is found in the phagosome membrane. The protein localises to the podosome. The protein resides in the cell junction. Its subcellular location is the postsynaptic density. It localises to the synapse. It is found in the synaptosome. The protein localises to the midbody. The protein resides in the membrane. Its subcellular location is the clathrin-coated pit. It catalyses the reaction GTP + H2O = GDP + phosphate + H(+). In terms of biological role, catalyzes the hydrolysis of GTP and utilizes this energy to mediate vesicle scission at plasma membrane during endocytosis and filament remodeling at many actin structures during organization of the actin cytoskeleton. Plays an important role in vesicular trafficking processes, namely clathrin-mediated endocytosis (CME), exocytic and clathrin-coated vesicle from the trans-Golgi network, and PDGF stimulated macropinocytosis. During vesicular trafficking process, associates to the membrane, through lipid binding, and self-assembles into ring-like structure through oligomerization to form a helical polymer around the vesicle membrane and leading to vesicle scission. Plays a role in organization of the actin cytoskeleton by mediating arrangement of stress fibers and actin bundles in podocytes. During organization of the actin cytoskeleton, self-assembles into ring-like structure that directly bundles actin filaments to form typical membrane tubules decorated with dynamin spiral polymers. Self-assembly increases GTPase activity and the GTP hydrolysis causes the rapid depolymerization of dynamin spiral polymers, and results in dispersion of actin bundles. Remodels, through its interaction with CTTN, bundled actin filaments in a GTPase-dependent manner and plays a role in orchestrating the global actomyosin cytoskeleton. The interaction with CTTN stabilizes the interaction of DNM2 and actin filaments and stimulates the intrinsic GTPase activity that results in actin filament-barbed ends and increases the sensitivity of filaments in bundles to the actin depolymerizing factor, CFL1. Plays a role in the autophagy process, by participating in the formation of ATG9A vesicles destined for the autophagosomes through its interaction with SNX18, by mediating recycling endosome scission leading to autophagosome release through MAP1LC3B interaction. Also regulates maturation of apoptotic cell corpse-containing phagosomes by recruiting PIK3C3 to the phagosome membrane. Also plays a role in cytokinesis. May participate in centrosome cohesion through its interaction with TUBG1. Plays a role in the regulation of neuron morphology, axon growth and formation of neuronal growth cones. Involved in membrane tubulation. The chain is Dynamin-2 from Homo sapiens (Human).